A 364-amino-acid chain; its full sequence is MRRVHITVILLAAVIFLLVLHHNILGLSDILKRQNSDTGPLVFQRLESLPDAPDIGPEHGHGEEIAVVIPGVEERLGGLIATINSISSNTKSNVVFYIITTNDTKKHISSWLDGTDLKRVAYKLLTFDARVLDGKVRVDAGAEPVKPMTFARFYLPSLLPGAKKVIYLDDDVIVQDDIVQLYNTPISPGHAAAFSEDCDSVTSKFPVRGGANQYNYIGFLDYKKERIRSLGIKANTCSFNPGVFVANLTEWRRQNITRQLEKWMELDVTEELYSKSLSGNIAAPPLLIVFYRLYSNINPLWHVRHLGSSTGKRYSPQFVKAAKLLHWNGHFKPWGRTSSFPEIWEKWFLPDPSGQFSLIRRHAE.

Topologically, residues 1 to 5 (MRRVH) are cytoplasmic. Residues 6 to 26 (ITVILLAAVIFLLVLHHNILG) form a helical; Signal-anchor for type II membrane protein membrane-spanning segment. The Lumenal portion of the chain corresponds to 27–364 (LSDILKRQNS…QFSLIRRHAE (338 aa)). N-linked (GlcNAc...) asparagine glycosylation is found at N102, N247, and N255.

Belongs to the glycosyltransferase 8 family.

The protein localises to the membrane. This is Glycosyltransferase 8 domain-containing protein 1 (glt8d1) from Xenopus laevis (African clawed frog).